A 355-amino-acid chain; its full sequence is NADH-quinone oxidoreductase subunit H (355 aa).

The next 8 helical transmembrane spans lie at 17–37 (IIMVAESVLVLVVLLVAIAYI), 86–106 (GVFLLAPLVSCVLALAAWAVI), 119–139 (VGILFIFAISSLSIYGIIMAG), 165–185 (IGFVIITVLLCAGTLNLSAVV), 204–224 (ILNWYVWPLFPMFVVFYVSAL), 262–282 (YVAIVTMCAMATILFLGGWLP), 291–311 (WVPGIIWFLLKVFFMFFLFAM), and 332–352 (FLPLSLAMVIVVAGVLHFAGI).

This sequence belongs to the complex I subunit 1 family. As to quaternary structure, NDH-1 is composed of 14 different subunits. Subunits NuoA, H, J, K, L, M, N constitute the membrane sector of the complex.

It is found in the cell inner membrane. The catalysed reaction is a quinone + NADH + 5 H(+)(in) = a quinol + NAD(+) + 4 H(+)(out). Its function is as follows. NDH-1 shuttles electrons from NADH, via FMN and iron-sulfur (Fe-S) centers, to quinones in the respiratory chain. The immediate electron acceptor for the enzyme in this species is believed to be ubiquinone. Couples the redox reaction to proton translocation (for every two electrons transferred, four hydrogen ions are translocated across the cytoplasmic membrane), and thus conserves the redox energy in a proton gradient. This subunit may bind ubiquinone. The sequence is that of NADH-quinone oxidoreductase subunit H from Bradyrhizobium diazoefficiens (strain JCM 10833 / BCRC 13528 / IAM 13628 / NBRC 14792 / USDA 110).